The following is a 1212-amino-acid chain: DNA-directed RNA polymerase subunit beta'' (1212 aa).

Positions 229, 302, 309, and 312 each coordinate Zn(2+). Residues glutamine 1162–lysine 1212 are disordered.

Belongs to the RNA polymerase beta' chain family. RpoC2 subfamily. In plastids the minimal PEP RNA polymerase catalytic core is composed of four subunits: alpha, beta, beta', and beta''. When a (nuclear-encoded) sigma factor is associated with the core the holoenzyme is formed, which can initiate transcription. Requires Zn(2+) as cofactor.

The protein resides in the plastid. Its subcellular location is the chloroplast. The enzyme catalyses RNA(n) + a ribonucleoside 5'-triphosphate = RNA(n+1) + diphosphate. Its function is as follows. DNA-dependent RNA polymerase catalyzes the transcription of DNA into RNA using the four ribonucleoside triphosphates as substrates. The chain is DNA-directed RNA polymerase subunit beta'' from Cryptomeria japonica (Japanese cedar).